A 352-amino-acid chain; its full sequence is B1 bradykinin receptor (352 aa).

Over 1-41 (MASWPPLQLQSSNQSQLFPQNATACDNAPEAWDLLHRVLPT) the chain is Extracellular. N-linked (GlcNAc...) asparagine glycosylation is found at Asn13 and Asn21. The chain crosses the membrane as a helical span at residues 42-62 (FIISICSFGLLGNLFVLLVFL). The Cytoplasmic segment spans residues 63 to 72 (LPRRRLNVAE). The helical transmembrane segment at 73-93 (IYLANLAASDLVFVLGLPFWA) threads the bilayer. Residues 94–110 (ENIWNQFNWPFGALLCR) lie on the Extracellular side of the membrane. Cys109 and Cys188 are oxidised to a cystine. A helical transmembrane segment spans residues 111 to 131 (VINGIIKANLFISIFLVVAIS). Topologically, residues 132–153 (QDRYCVLVHPMASRRRQRRRQA) are cytoplasmic. The helical transmembrane segment at 154 to 174 (RVTCVLIWVVGGLLSIPTFLL) threads the bilayer. Over 175–206 (RSIQAVPDLNITACILLLPHEAWHFARIVELN) the chain is Extracellular. A glycan (N-linked (GlcNAc...) asparagine) is linked at Asn184. The chain crosses the membrane as a helical span at residues 207 to 227 (ILAFLLPLAAIIFFNYHILAS). Residues 228–250 (LRGREEVSRTRCGGSKDSKTTAL) are Cytoplasmic-facing. A helical membrane pass occupies residues 251 to 271 (ILTLVVAFLVCWAPYHFFAFL). Residues 272 to 294 (EFLFQVQAVRGCFWEDFIDLGLQ) are Extracellular-facing. A helical transmembrane segment spans residues 295 to 315 (LANFLAFTNSSLNPVIYVFAG). Residues 316–352 (RLFRTKVWELYKQCTPKSLAPISSSHRKEIFQLFWRN) are Cytoplasmic-facing. Cys329 is lipidated: S-palmitoyl cysteine.

This sequence belongs to the G-protein coupled receptor 1 family. Bradykinin receptor subfamily. BDKRB1 sub-subfamily.

It localises to the cell membrane. Functionally, this is a receptor for bradykinin. Could be a factor in chronic pain and inflammation. In Macaca fascicularis (Crab-eating macaque), this protein is B1 bradykinin receptor (BDKRB1).